The primary structure comprises 340 residues: Pilin (340 aa).

Positions 1–23 (MKLRHLLLTGAALTSFAATTVHG) are cleaved as a signal peptide. 2 consecutive cross-links (isoaspartyl lysine isopeptide (Lys-Asn)) follow at residues 36–168 (KNLD…QFKN) and 179–303 (KKVS…TFTN). A Threonyl lysine isopeptide (Lys-Thr) (interchain with T-311) cross-link involves residue K161. The short motif at 308–312 (EVPTG) is the EVPTG sorting signal element. Position 311 is a pentaglycyl murein peptidoglycan amidated threonine; alternate (T311). Residue T311 forms a Threonyl lysine isopeptide (Thr-Lys) (interchain with K-161); alternate linkage. Positions 312-340 (GVAMTVAPYIALGIVAVGGALYFVKKKNA) are cleaved as a propeptide — removed by sortase C1.

It belongs to the Streptococcus pilin family. As to quaternary structure, forms columns of about 3-nanometers in diameter of head-to-tail-assembled molecules. In terms of processing, proteolytically processed and assembled in pili through a transpeptidation reaction catalyzed by the sortase C1. The last pilin subunit is cross-linked to the peptidoglycan.

The protein resides in the secreted. Its subcellular location is the cell wall. The protein localises to the fimbrium. Its function is as follows. Major component of the pilus. A stack of the pilin subunits, joined by intermolecular isopeptide bonds, forms the pilus. The pilus is required for bacterial adhesion to host cells, for bacterial aggregation, and for biofilm formation. The polypeptide is Pilin (Streptococcus pyogenes serotype M1).